Here is a 581-residue protein sequence, read N- to C-terminus: Arginine--tRNA ligase (581 aa).

Positions 126–136 (PNLAKEMHVGH) match the 'HIGH' region motif.

It belongs to the class-I aminoacyl-tRNA synthetase family. In terms of assembly, monomer.

It localises to the cytoplasm. The catalysed reaction is tRNA(Arg) + L-arginine + ATP = L-arginyl-tRNA(Arg) + AMP + diphosphate. This chain is Arginine--tRNA ligase, found in Shewanella loihica (strain ATCC BAA-1088 / PV-4).